Here is a 522-residue protein sequence, read N- to C-terminus: F-box/LRR-repeat protein 16 (522 aa).

An F-box domain is found at 38 to 84 (YDFTANLPDDCLAHIFQFLSAGDRKRCSLVSKRWLLVDGQNRHRLSL). 10 LRR repeats span residues 115-140 (SFSL…KLRG), 141-166 (CREI…SCGS), 169-191 (FGAK…SLKR), 266-290 (RLQV…HIVK), 291-316 (TPDC…HIDG), 319-344 (VKRI…VLIG), 348-369 (TYMS…ALCG), 370-393 (SGTI…KFCI), 395-420 (GCLI…KVKK), and 421-447 (CSLV…DDDE).

This is F-box/LRR-repeat protein 16 (FBL16) from Arabidopsis thaliana (Mouse-ear cress).